The sequence spans 293 residues: 3-methyl-2-oxobutanoate hydroxymethyltransferase (293 aa).

The disordered stretch occupies residues 1 to 26 (MTQAPVTAGTPYGTIPPASPLPQRRP). D68 and D111 together coordinate Mg(2+). Residues 68 to 69 (DS), D111, and K140 each bind 3-methyl-2-oxobutanoate. E142 is a binding site for Mg(2+). E209 functions as the Proton acceptor in the catalytic mechanism.

Belongs to the PanB family. Homodecamer; pentamer of dimers. Mg(2+) serves as cofactor.

Its subcellular location is the cytoplasm. It catalyses the reaction 3-methyl-2-oxobutanoate + (6R)-5,10-methylene-5,6,7,8-tetrahydrofolate + H2O = 2-dehydropantoate + (6S)-5,6,7,8-tetrahydrofolate. It functions in the pathway cofactor biosynthesis; (R)-pantothenate biosynthesis; (R)-pantoate from 3-methyl-2-oxobutanoate: step 1/2. Its function is as follows. Catalyzes the reversible reaction in which hydroxymethyl group from 5,10-methylenetetrahydrofolate is transferred onto alpha-ketoisovalerate to form ketopantoate. This is 3-methyl-2-oxobutanoate hydroxymethyltransferase from Delftia acidovorans (strain DSM 14801 / SPH-1).